The sequence spans 85 residues: Antifungal protein (85 aa).

The signal sequence occupies residues 1–18 (MVKLFVIVILALIAVAFG). A run of 2 repeats spans residues 19–25 (QHGHGGQ) and 67–73 (QHGHGGQ). The tract at residues 19-73 (QHGHGGQDQHGYGHGQQAVYGKGHEGHGVNNLGQDGHGQHGYAHGHSDQHGHGGQ) is 2 X 7 AA repeats of Q-H-G-H-G-G-Q. Positions 22–32 (HGGQDQHGYGH) are enriched in gly residues. A disordered region spans residues 22–85 (HGGQDQHGYG…QHDGYKNRGY (64 aa)). Residues 63–85 (GHSDQHGHGGQHGQHDGYKNRGY) are compositionally biased toward basic and acidic residues.

As to quaternary structure, homodimer. The N-terminus is blocked. Hemolymph.

Its function is as follows. This protein inhibits the growth of a variety of fungal species. The antifungal activity of this protein is enhanced by the presence of sarcotoxin IA. This is Antifungal protein from Sarcophaga peregrina (Flesh fly).